Consider the following 624-residue polypeptide: Cell pattern formation-associated protein ust1 (624 aa).

Disordered stretches follow at residues 1-24 (MSTA…APTG) and 43-99 (RSGS…GHSS). Residues 43–62 (RSGSVPASASGSAPGSASGS) are compositionally biased toward low complexity. Over residues 70-85 (QHHTGHHHYSAHHTHS) the composition is skewed to basic residues. The region spanning 233-339 (RVTTTLWEDE…PNIQSFLYHP (107 aa)) is the HTH APSES-type domain. Residues 267–288 (GTKLLNVCGMSRGKRDGILKNE) constitute a DNA-binding region (H-T-H motif). The span at 352-362 (AQERQAQRQRA) shows a compositional bias: low complexity. Disordered regions lie at residues 352–456 (AQER…QQQQ), 474–504 (QQAY…LNNS), and 538–624 (SWND…IHHE). The span at 369–391 (PGANGTSQAPPLMRANTTPSNGD) shows a compositional bias: polar residues. Over residues 392-426 (TSTFSSGLSSLGSWTGSHDQGHASAPTTAQPSPSS) the composition is skewed to low complexity. The segment covering 427 to 451 (MHNGATQMHMSLSNHGTASPTYAQS) has biased composition (polar residues). The segment covering 571–587 (LDGDDLHSPDSSDDRLA) has biased composition (basic and acidic residues). Positions 615 to 624 (VGNGSGIHHE) are enriched in gly residues.

Belongs to the EFG1/PHD1/stuA family. Phosphorylated but is not a target of cAMP signaling.

The protein resides in the nucleus. Transcription factor that regulates asexual reproduction. Binds the StuA-response elements (StRE) with the consensus sequence 5'-(A/T)CGCG(T/A)N(A/C)-3' at the promoters of target genes. Regulates dimorphism, virulence, and the sporulation program. Required for mating, gall induction, and sporogenesis in maize tissue. Regulates expression of the filament-down-regulated gene UM00205 and the teliospore-specific gene ssp1. The chain is Cell pattern formation-associated protein ust1 (ust1) from Mycosarcoma maydis (Corn smut fungus).